The primary structure comprises 490 residues: Delta(14)-sterol reductase (490 aa).

Helical transmembrane passes span 23-43 (FGGP…VHVF), 80-100 (VFGL…ALSL), 136-156 (LAIL…WTFI), 160-180 (FAQI…FVYV), 230-250 (EFME…AFIA), 255-275 (LYGY…FYVF), and 324-344 (QLGA…YSIF). NADP(+) is bound by residues Lys-351, Arg-355, Ile-378, Trp-383, and 390–391 (NY). The chain crosses the membrane as a helical span at residues 436–456 (ARGWGIVFTYFYILYFAILLI). NADP(+)-binding positions include Asp-462, 466–470 (CSKKY), and Tyr-477.

The protein belongs to the ERG4/ERG24 family.

It localises to the membrane. It catalyses the reaction 4,4-dimethyl-5alpha-cholesta-8,24-dien-3beta-ol + NADP(+) = 4,4-dimethyl-5alpha-cholesta-8,14,24-trien-3beta-ol + NADPH + H(+). The protein operates within steroid biosynthesis; zymosterol biosynthesis; zymosterol from lanosterol: step 2/6. Functionally, reduces the C14=C15 double bond of 4,4-dimethyl-cholesta-8,14,24-trienol to produce 4,4-dimethyl-cholesta-8,24-dienol. The protein is Delta(14)-sterol reductase (erg-3) of Neurospora crassa (strain ATCC 24698 / 74-OR23-1A / CBS 708.71 / DSM 1257 / FGSC 987).